The primary structure comprises 109 residues: Phosphoribosyl-AMP cyclohydrolase (109 aa).

Asp-76 contacts Mg(2+). A Zn(2+)-binding site is contributed by Cys-77. Mg(2+) is bound by residues Asp-78 and Asp-80. Cys-93 and Cys-100 together coordinate Zn(2+).

It belongs to the PRA-CH family. Homodimer. Mg(2+) serves as cofactor. It depends on Zn(2+) as a cofactor.

The protein localises to the cytoplasm. It catalyses the reaction 1-(5-phospho-beta-D-ribosyl)-5'-AMP + H2O = 1-(5-phospho-beta-D-ribosyl)-5-[(5-phospho-beta-D-ribosylamino)methylideneamino]imidazole-4-carboxamide. It participates in amino-acid biosynthesis; L-histidine biosynthesis; L-histidine from 5-phospho-alpha-D-ribose 1-diphosphate: step 3/9. Its function is as follows. Catalyzes the hydrolysis of the adenine ring of phosphoribosyl-AMP. This is Phosphoribosyl-AMP cyclohydrolase from Streptococcus mutans serotype c (strain ATCC 700610 / UA159).